The following is a 73-amino-acid chain: Translation initiation factor IF-1 (73 aa).

The region spanning 1–72 (MAKEDHIEMA…SKGRIIFRDK (72 aa)) is the S1-like domain.

This sequence belongs to the IF-1 family. As to quaternary structure, component of the 30S ribosomal translation pre-initiation complex which assembles on the 30S ribosome in the order IF-2 and IF-3, IF-1 and N-formylmethionyl-tRNA(fMet); mRNA recruitment can occur at any time during PIC assembly.

It is found in the cytoplasm. In terms of biological role, one of the essential components for the initiation of protein synthesis. Stabilizes the binding of IF-2 and IF-3 on the 30S subunit to which N-formylmethionyl-tRNA(fMet) subsequently binds. Helps modulate mRNA selection, yielding the 30S pre-initiation complex (PIC). Upon addition of the 50S ribosomal subunit IF-1, IF-2 and IF-3 are released leaving the mature 70S translation initiation complex. The protein is Translation initiation factor IF-1 of Legionella pneumophila (strain Paris).